A 367-amino-acid polypeptide reads, in one-letter code: Peptide chain release factor 2 (367 aa).

The residue at position 254 (Gln254) is an N5-methylglutamine.

This sequence belongs to the prokaryotic/mitochondrial release factor family. Post-translationally, methylated by PrmC. Methylation increases the termination efficiency of RF2.

The protein resides in the cytoplasm. Functionally, peptide chain release factor 2 directs the termination of translation in response to the peptide chain termination codons UGA and UAA. The polypeptide is Peptide chain release factor 2 (Neisseria gonorrhoeae (strain ATCC 700825 / FA 1090)).